The primary structure comprises 179 residues: Large ribosomal subunit protein uL5 (179 aa).

The protein belongs to the universal ribosomal protein uL5 family. As to quaternary structure, part of the 50S ribosomal subunit; part of the 5S rRNA/L5/L18/L25 subcomplex. Contacts the 5S rRNA and the P site tRNA. Forms a bridge to the 30S subunit in the 70S ribosome.

Its function is as follows. This is one of the proteins that bind and probably mediate the attachment of the 5S RNA into the large ribosomal subunit, where it forms part of the central protuberance. In the 70S ribosome it contacts protein S13 of the 30S subunit (bridge B1b), connecting the 2 subunits; this bridge is implicated in subunit movement. Contacts the P site tRNA; the 5S rRNA and some of its associated proteins might help stabilize positioning of ribosome-bound tRNAs. In Glaesserella parasuis serovar 5 (strain SH0165) (Haemophilus parasuis), this protein is Large ribosomal subunit protein uL5.